The following is a 346-amino-acid chain: Probable choline kinase 1 (346 aa).

Residues arginine 73, glutamine 210, and aspartate 227 each contribute to the ATP site.

The protein belongs to the choline/ethanolamine kinase family. As to expression, expressed in roots. Expressed at low levels in cauline leaves and flowers.

It carries out the reaction choline + ATP = phosphocholine + ADP + H(+). The protein operates within phospholipid metabolism; phosphatidylcholine biosynthesis; phosphocholine from choline: step 1/1. Functionally, involved in phospholipid biosynthesis. Catalyzes the first step in phosphatidylcholine biosynthesis. The protein is Probable choline kinase 1 (CK1) of Arabidopsis thaliana (Mouse-ear cress).